Here is a 445-residue protein sequence, read N- to C-terminus: MQGLYIKSYGCQMNVYDSLIIENIIKPLGFSIVNELSEADIVILNTCHIREKAAEKLYSELGRIRKIQETKNLTIVVAGCVAQAEGTEIFTRAPFVDIVVGPQSIHTLPELIVKARKIKKQIINIDFPVISKFDAIAVEEYTKNQKVSAFISVQEGCNKFCSFCVVPYTRGEEYSRTVEAIFKEALILADSGIKEITLIGQNVNAYHGTYKGNEWDLGRLIQHIAKISSIERIYYTTSHPRDMHESLYEAHGIEKKLIPFIHLPVQSGSNKILRKMNRKHTAEEYINIIKTLRKHRSDIAYSSDFIVGFPGETDEDFENTIRLIEEVKFSQAYSFKYSPRPGTPSAEYTSQIPDEIKSQRLTKLQELVHKQQLEFNKKMIGETHPVLFYKKGKFDNQIIGKTPYMQSCYINTENPDLYYNKIVPIKITDAHKNHLTGIIPHTLPV.

One can recognise an MTTase N-terminal domain in the interval 2 to 117; sequence QGLYIKSYGC…LPELIVKARK (116 aa). Residues Cys-11, Cys-47, Cys-80, Cys-157, Cys-161, and Cys-164 each contribute to the [4Fe-4S] cluster site. Residues 143-374 enclose the Radical SAM core domain; the sequence is KNQKVSAFIS…QELVHKQQLE (232 aa). The TRAM domain occupies 377–441; it reads KKMIGETHPV…KNHLTGIIPH (65 aa).

The protein belongs to the methylthiotransferase family. MiaB subfamily. As to quaternary structure, monomer. It depends on [4Fe-4S] cluster as a cofactor.

The protein localises to the cytoplasm. The enzyme catalyses N(6)-dimethylallyladenosine(37) in tRNA + (sulfur carrier)-SH + AH2 + 2 S-adenosyl-L-methionine = 2-methylsulfanyl-N(6)-dimethylallyladenosine(37) in tRNA + (sulfur carrier)-H + 5'-deoxyadenosine + L-methionine + A + S-adenosyl-L-homocysteine + 2 H(+). Its function is as follows. Catalyzes the methylthiolation of N6-(dimethylallyl)adenosine (i(6)A), leading to the formation of 2-methylthio-N6-(dimethylallyl)adenosine (ms(2)i(6)A) at position 37 in tRNAs that read codons beginning with uridine. The chain is tRNA-2-methylthio-N(6)-dimethylallyladenosine synthase from Ehrlichia ruminantium (strain Gardel).